The sequence spans 299 residues: Elongation factor Ts, mitochondrial (299 aa).

The N-terminal 18 residues, 1–18 (MLFQRRLHFHQFFGKTRV), are a transit peptide targeting the mitochondrion.

The protein belongs to the EF-Ts family.

It is found in the mitochondrion. Functionally, associates with the EF-Tu.GDP complex and induces the exchange of GDP to GTP. It remains bound to the aminoacyl-tRNA.EF-Tu.GTP complex up to the GTP hydrolysis stage on the ribosome. The chain is Elongation factor Ts, mitochondrial (tsf1) from Schizosaccharomyces pombe (strain 972 / ATCC 24843) (Fission yeast).